The primary structure comprises 271 residues: MFSIQQPLLVFSDLDGTLLDSHSYDWQPAAPWLSRLREANVPVILCSSKTSAEMLYLQKTLGLQGVPLIAENGAVIQLAEQWQDIDGFPRIISGISHGEISQVLNTLREKEHFKFTTFDDVDDATIAEWTGLSRSQAALTQLHEASVTLIWRDSDERMAQFTARLNELGLQFMQGARFWHVLDASAGKDQAANWIIATYQQLSGKRPTTLGLGDGPNDAPLLEVMDYAVIVKGLNREGVHLHDEDPARVWRTQREGPEGWREGLDHFFSAR.

The active-site Nucleophile is the Asp13. Residues Asp13, Asp15, and Asp214 each contribute to the Mg(2+) site.

Belongs to the HAD-like hydrolase superfamily. MPGP family. The cofactor is Mg(2+).

The protein resides in the cytoplasm. It catalyses the reaction 2-O-(alpha-D-mannosyl)-3-phosphoglycerate + H2O = (2R)-2-O-(alpha-D-mannosyl)-glycerate + phosphate. The sequence is that of Mannosyl-3-phosphoglycerate phosphatase (yedP) from Shigella boydii serotype 4 (strain Sb227).